Reading from the N-terminus, the 202-residue chain is Coiled-coil domain-containing protein 85B (202 aa).

At M1 the chain carries N-acetylmethionine. Coiled coils occupy residues 43 to 90 and 118 to 147; these read GRLM…ERQR and QKLA…LGEE. Residues 148-202 are disordered; it reads WGPRGGPSGAGGSGAGPAPELALPPCGPRDLGDGSSSTGSVGSPDQLPLACSPDD. Residues 150-162 show a composition bias toward gly residues; sequence PRGGPSGAGGSGA. Residues 180 to 190 are compositionally biased toward low complexity; it reads DGSSSTGSVGS.

Belongs to the CCDC85 family. In terms of assembly, interacts with CEBPB. Interacts with EURL. May interact with CEBPD. Interacts with MCRS1. Interacts with TCF7L2; competes with CTNNB1. Interacts with ANKRD26. Interacts with the beta-catenin family proteins ARVCF, CTNND1, CTNND2 and PKP4. As to quaternary structure, (Microbial infection) Interacts with the viral phosphoprotein hepatitis delta antigen (HDAG); this interaction affects hepatitis delta virus (HDV) genomic replication in intact cells. Widely expressed including liver.

The protein localises to the nucleus. It is found in the cytoplasm. The protein resides in the cytoskeleton. Its subcellular location is the microtubule organizing center. It localises to the centrosome. The protein localises to the cell junction. It is found in the adherens junction. Its function is as follows. Functions as a transcriptional repressor. May inhibit the activity of CTNNB1 in a TP53-dependent manner and thus regulate cell growth. May function in adipocyte differentiation, negatively regulating mitotic clonal expansion. Plays a role in cell-cell adhesion and epithelium development through its interaction with proteins of the beta-catenin family. (Microbial infection) Plays a role in hepatitis delta virus (HDV) genomic replication. The chain is Coiled-coil domain-containing protein 85B (CCDC85B) from Homo sapiens (Human).